A 276-amino-acid chain; its full sequence is Glucosamine-6-phosphate deaminase 2 (276 aa).

The active-site Proton acceptor; for enolization step is Asp72. Residues 103–131 are a coiled coil; sequence NAHILDGNAADLQAECDAFEEKIKEAGGI. The For ring-opening step role is filled by Asp141. His143 acts as the Proton acceptor; for ring-opening step in catalysis. Residue Glu148 is the For ring-opening step of the active site. The residue at position 161 (Thr161) is a Phosphothreonine.

This sequence belongs to the glucosamine/galactosamine-6-phosphate isomerase family. In terms of assembly, homohexamer.

The protein localises to the cytoplasm. The catalysed reaction is alpha-D-glucosamine 6-phosphate + H2O = beta-D-fructose 6-phosphate + NH4(+). The protein operates within nucleotide-sugar biosynthesis; UDP-N-acetyl-alpha-D-glucosamine biosynthesis; alpha-D-glucosamine 6-phosphate from D-fructose 6-phosphate: step 1/1. With respect to regulation, allosterically activated by N-acetylglucosamine-6-phosphate (GlcNAc6P). Functionally, catalyzes the reversible conversion of alpha-D-glucosamine 6-phosphate (GlcN-6P) into beta-D-fructose 6-phosphate (Fru-6P) and ammonium ion, a regulatory reaction step in de novo uridine diphosphate-N-acetyl-alpha-D-glucosamine (UDP-GlcNAc) biosynthesis via hexosamine pathway. Deamination is coupled to aldo-keto isomerization mediating the metabolic flux from UDP-GlcNAc toward Fru-6P. At high ammonium level can drive amination and isomerization of Fru-6P toward hexosamines and UDP-GlcNAc synthesis. Has a role in fine tuning the metabolic fluctuations of cytosolic UDP-GlcNAc and their effects on hyaluronan synthesis that occur during tissue remodeling. In Mus musculus (Mouse), this protein is Glucosamine-6-phosphate deaminase 2.